Consider the following 275-residue polypeptide: 2,3,4,5-tetrahydropyridine-2,6-dicarboxylate N-succinyltransferase (275 aa).

2 residues coordinate substrate: Arg106 and Asp143.

The protein belongs to the transferase hexapeptide repeat family. Homotrimer.

Its subcellular location is the cytoplasm. It carries out the reaction (S)-2,3,4,5-tetrahydrodipicolinate + succinyl-CoA + H2O = (S)-2-succinylamino-6-oxoheptanedioate + CoA. It participates in amino-acid biosynthesis; L-lysine biosynthesis via DAP pathway; LL-2,6-diaminopimelate from (S)-tetrahydrodipicolinate (succinylase route): step 1/3. In Burkholderia pseudomallei (strain 1106a), this protein is 2,3,4,5-tetrahydropyridine-2,6-dicarboxylate N-succinyltransferase.